Consider the following 405-residue polypeptide: Cystathionine gamma-lyase (405 aa).

The substrate site is built by arginine 62, tyrosine 114, and arginine 119. Lysine 212 is modified (N6-(pyridoxal phosphate)lysine). Substrate is bound at residue glutamate 339.

It belongs to the trans-sulfuration enzymes family. In terms of assembly, homotetramer. Interacts with CALM in a calcium-dependent manner. It depends on pyridoxal 5'-phosphate as a cofactor.

The protein localises to the cytoplasm. It catalyses the reaction L,L-cystathionine + H2O = 2-oxobutanoate + L-cysteine + NH4(+). It carries out the reaction L-cysteine + H2O = hydrogen sulfide + pyruvate + NH4(+) + H(+). The enzyme catalyses L-homocysteine + H2O = 2-oxobutanoate + hydrogen sulfide + NH4(+) + H(+). The catalysed reaction is L-homoserine = 2-oxobutanoate + NH4(+). It catalyses the reaction L-selenocystathionine + H2O = L-selenocysteine + 2-oxobutanoate + NH4(+). It participates in amino-acid biosynthesis; L-cysteine biosynthesis; L-cysteine from L-homocysteine and L-serine: step 2/2. In terms of biological role, catalyzes the last step in the trans-sulfuration pathway from L-methionine to L-cysteine in a pyridoxal-5'-phosphate (PLP)-dependent manner, which consists on cleaving the L,L-cystathionine molecule into L-cysteine, ammonia and 2-oxobutanoate. Part of the L-cysteine derived from the trans-sulfuration pathway is utilized for biosynthesis of the ubiquitous antioxidant glutathione. Besides its role in the conversion of L-cystathionine into L-cysteine, it utilizes L-cysteine and L-homocysteine as substrates (at much lower rates than L,L-cystathionine) to produce hydrogen sulfide (H2S). In vitro, it converts two L-cysteine molecules into lanthionine and H2S, and two L-homocysteine molecules to homolanthionine and H2S, which can be particularly relevant under conditions of severe hyperhomocysteinemia. Lanthionine and homolanthionine are structural homologs of L,L-cystathionine that differ by the absence or presence of an extra methylene group, respectively. Acts as a cysteine-protein sulfhydrase by mediating sulfhydration of target proteins: sulfhydration consists of converting -SH groups into -SSH on specific cysteine residues of target proteins such as GAPDH, PTPN1 and NF-kappa-B subunit RELA, thereby regulating their function. By generating the gasotransmitter H2S, it participates in a number of physiological processes such as vasodilation, bone protection, and inflammation. Plays an essential role in myogenesis by contributing to the biogenesis of H2S in skeletal muscle tissue. Can also accept homoserine as substrate. Catalyzes the elimination of selenocystathionine (which can be derived from the diet) to yield selenocysteine, ammonia and 2-oxobutanoate. This chain is Cystathionine gamma-lyase (CTH), found in Macaca fascicularis (Crab-eating macaque).